The primary structure comprises 280 residues: Formamidopyrimidine-DNA glycosylase (280 aa).

P2 (schiff-base intermediate with DNA) is an active-site residue. The active-site Proton donor is E3. Catalysis depends on K59, which acts as the Proton donor; for beta-elimination activity. 2 residues coordinate DNA: H92 and R111. The FPG-type zinc finger occupies 239–273; the sequence is NVYGQTGLPCNRCGTPIVKTKVAQRGTHYCPQCQQ. The Proton donor; for delta-elimination activity role is filled by R263.

Belongs to the FPG family. Monomer. Zn(2+) serves as cofactor.

It catalyses the reaction Hydrolysis of DNA containing ring-opened 7-methylguanine residues, releasing 2,6-diamino-4-hydroxy-5-(N-methyl)formamidopyrimidine.. It carries out the reaction 2'-deoxyribonucleotide-(2'-deoxyribose 5'-phosphate)-2'-deoxyribonucleotide-DNA = a 3'-end 2'-deoxyribonucleotide-(2,3-dehydro-2,3-deoxyribose 5'-phosphate)-DNA + a 5'-end 5'-phospho-2'-deoxyribonucleoside-DNA + H(+). In terms of biological role, involved in base excision repair of DNA damaged by oxidation or by mutagenic agents. Acts as a DNA glycosylase that recognizes and removes damaged bases. Has a preference for oxidized purines, such as 7,8-dihydro-8-oxoguanine (8-oxoG). Has AP (apurinic/apyrimidinic) lyase activity and introduces nicks in the DNA strand. Cleaves the DNA backbone by beta-delta elimination to generate a single-strand break at the site of the removed base with both 3'- and 5'-phosphates. The polypeptide is Formamidopyrimidine-DNA glycosylase (Enterococcus faecalis (strain ATCC 700802 / V583)).